Reading from the N-terminus, the 251-residue chain is Triosephosphate isomerase (251 aa).

Position 12–14 (12–14 (NWK)) interacts with substrate. His98 functions as the Electrophile in the catalytic mechanism. Residue Glu168 is the Proton acceptor of the active site. Residues Gly174, Ser213, and 234 to 235 (GG) each bind substrate.

It belongs to the triosephosphate isomerase family. Homodimer.

It localises to the cytoplasm. It catalyses the reaction D-glyceraldehyde 3-phosphate = dihydroxyacetone phosphate. The protein operates within carbohydrate biosynthesis; gluconeogenesis. It participates in carbohydrate degradation; glycolysis; D-glyceraldehyde 3-phosphate from glycerone phosphate: step 1/1. Its function is as follows. Involved in the gluconeogenesis. Catalyzes stereospecifically the conversion of dihydroxyacetone phosphate (DHAP) to D-glyceraldehyde-3-phosphate (G3P). This chain is Triosephosphate isomerase, found in Afipia carboxidovorans (strain ATCC 49405 / DSM 1227 / KCTC 32145 / OM5) (Oligotropha carboxidovorans).